The primary structure comprises 775 residues: Zinc finger protein GLIS3 (775 aa).

Disordered stretches follow at residues threonine 121–alanine 147 and proline 282–histidine 314. Residues serine 123 to histidine 133 are compositionally biased toward low complexity. Residues serine 134–alanine 147 show a composition bias toward basic residues. Residues proline 289–tyrosine 307 are compositionally biased toward pro residues. The C2H2-type 1 zinc finger occupies histidine 345 to histidine 370. The C2H2-type 2; atypical zinc-finger motif lies at phenylalanine 379–histidine 406. C2H2-type zinc fingers lie at residues asparagine 412–histidine 436, tyrosine 442–histidine 466, and tyrosine 472–histidine 496. Disordered stretches follow at residues aspartate 485–glutamate 512 and proline 529–glycine 665. The Bipartite nuclear localization signal signature appears at lysine 491 to leucine 507. Residues serine 497–glutamate 512 show a composition bias toward basic and acidic residues. Composition is skewed to polar residues over residues isoleucine 557 to glycine 567, valine 588 to proline 600, and serine 632 to proline 663.

Belongs to the GLI C2H2-type zinc-finger protein family. In the adult, expressed at high levels in the kidney and at lower levels in the brain, skeletal muscle, pancreas, liver, lung, thymus and ovary.

Its subcellular location is the nucleus. In terms of biological role, acts both as a repressor and an activator of transcription. Binds to the consensus sequence 5'-GACCACCCAC-3'. This Homo sapiens (Human) protein is Zinc finger protein GLIS3 (GLIS3).